Consider the following 148-residue polypeptide: Glutamyl-tRNA(Gln) amidotransferase subunit C, mitochondrial (148 aa).

Belongs to the GatC family. As to quaternary structure, subunit of the heterotrimeric GatCAB amidotransferase (AdT) complex, composed of A, B and C subunits.

Its subcellular location is the mitochondrion. It carries out the reaction L-glutamyl-tRNA(Gln) + L-glutamine + ATP + H2O = L-glutaminyl-tRNA(Gln) + L-glutamate + ADP + phosphate + H(+). Functionally, allows the formation of correctly charged Gln-tRNA(Gln) through the transamidation of misacylated Glu-tRNA(Gln) in the mitochondria. The reaction takes place in the presence of glutamine and ATP through an activated gamma-phospho-Glu-tRNA(Gln). This Drosophila simulans (Fruit fly) protein is Glutamyl-tRNA(Gln) amidotransferase subunit C, mitochondrial.